We begin with the raw amino-acid sequence, 273 residues long: Homeobox protein Hox-C13b (273 aa).

Residues 201–260 constitute a DNA-binding region (homeobox); that stretch reads GRKKRVPYTKIQLKELEKEYAASKFITKDRRRRISATTSLSERQVTIWFQNRRVKEKKFV.

It belongs to the Abd-B homeobox family.

It localises to the nucleus. Sequence-specific transcription factor which is part of a developmental regulatory system that provides cells with specific positional identities on the anterior-posterior axis. Plays a role in early embryonic development. The protein is Homeobox protein Hox-C13b (hoxc13b) of Danio rerio (Zebrafish).